The sequence spans 202 residues: MTTLLAAGWPVLIAALVLGYACGAIPFGLILTKFAGLGDVRAIGSGNIGATNVLRTGRKGLAAATLLCDALKGTLPVLAASHWGEGPALAAGLGAFLGHLFPVWLGFKGGKGVATFIGVLLALSPVTLAAFAAIWLGLAFALKYSSLSALAASAATPLILWALGHGAVAALFLVLAALLWWKHAPNIRRLAAGTEGRIGKKG.

A run of 4 helical transmembrane segments spans residues Val-11–Leu-31, Pro-87–Phe-107, Phe-116–Leu-136, and Leu-158–Leu-178.

Belongs to the PlsY family. Probably interacts with PlsX.

The protein resides in the cell inner membrane. It catalyses the reaction an acyl phosphate + sn-glycerol 3-phosphate = a 1-acyl-sn-glycero-3-phosphate + phosphate. It participates in lipid metabolism; phospholipid metabolism. Its function is as follows. Catalyzes the transfer of an acyl group from acyl-phosphate (acyl-PO(4)) to glycerol-3-phosphate (G3P) to form lysophosphatidic acid (LPA). This enzyme utilizes acyl-phosphate as fatty acyl donor, but not acyl-CoA or acyl-ACP. The protein is Glycerol-3-phosphate acyltransferase of Methylorubrum extorquens (strain PA1) (Methylobacterium extorquens).